The chain runs to 584 residues: 2-succinyl-5-enolpyruvyl-6-hydroxy-3-cyclohexene-1-carboxylate synthase (584 aa).

It belongs to the TPP enzyme family. MenD subfamily. In terms of assembly, homodimer. Mg(2+) serves as cofactor. It depends on Mn(2+) as a cofactor. The cofactor is thiamine diphosphate.

The enzyme catalyses isochorismate + 2-oxoglutarate + H(+) = 5-enolpyruvoyl-6-hydroxy-2-succinyl-cyclohex-3-ene-1-carboxylate + CO2. Its pathway is quinol/quinone metabolism; 1,4-dihydroxy-2-naphthoate biosynthesis; 1,4-dihydroxy-2-naphthoate from chorismate: step 2/7. It functions in the pathway quinol/quinone metabolism; menaquinone biosynthesis. Its function is as follows. Catalyzes the thiamine diphosphate-dependent decarboxylation of 2-oxoglutarate and the subsequent addition of the resulting succinic semialdehyde-thiamine pyrophosphate anion to isochorismate to yield 2-succinyl-5-enolpyruvyl-6-hydroxy-3-cyclohexene-1-carboxylate (SEPHCHC). The protein is 2-succinyl-5-enolpyruvyl-6-hydroxy-3-cyclohexene-1-carboxylate synthase of Bacillus cereus (strain ATCC 10987 / NRS 248).